We begin with the raw amino-acid sequence, 436 residues long: Chromosomal replication initiator protein DnaA (436 aa).

Positions 1 to 69 are domain I, interacts with DnaA modulators; sequence MSIFTKIKKS…SELYEKETGI (69 aa). The tract at residues 69 to 97 is domain II; it reads IKPKIDIVTKEISHRPLTIEEIIEPTTPS. The domain III, AAA+ region stretch occupies residues 98–311; that stretch reads VLIPEYTFES…GMITKINAMS (214 aa). Positions 142, 144, 145, and 146 each coordinate ATP. Residues 312–436 form a domain IV, binds dsDNA region; the sequence is KILGISEITL…KNKIQIKKSE (125 aa).

Belongs to the DnaA family. Oligomerizes as a right-handed, spiral filament on DNA at oriC.

The protein localises to the cytoplasm. Its function is as follows. Plays an essential role in the initiation and regulation of chromosomal replication. ATP-DnaA binds to the origin of replication (oriC) to initiate formation of the DNA replication initiation complex once per cell cycle. Binds the DnaA box (a 9 base pair repeat at the origin) and separates the double-stranded (ds)DNA. Forms a right-handed helical filament on oriC DNA; dsDNA binds to the exterior of the filament while single-stranded (ss)DNA is stabiized in the filament's interior. The ATP-DnaA-oriC complex binds and stabilizes one strand of the AT-rich DNA unwinding element (DUE), permitting loading of DNA polymerase. After initiation quickly degrades to an ADP-DnaA complex that is not apt for DNA replication. Binds acidic phospholipids. The sequence is that of Chromosomal replication initiator protein DnaA from Nautilia profundicola (strain ATCC BAA-1463 / DSM 18972 / AmH).